The sequence spans 216 residues: MKPSFLHIPAAALLLCSLWILPIYCCNKALCASDVSKCLIQELCQCRPTDGNCSCCKECMLCLGTLWDECCDCVGMCKPRNYSDTPPTSKSTVEELHEPIPSLFRALTEGDTQLNWNIVTFPVVEELSHHENLVSFLENVNQPQNVSVQVSHSNEKEHMCTVVYFDDCMSIHQCKVSCESMGASKYRWFHNACCECVGPECIDYGSKTVKCVNCMV.

A signal peptide spans 1–25 (MKPSFLHIPAAALLLCSLWILPIYC). N-linked (GlcNAc...) asparagine glycosylation is found at Asn52, Asn81, and Asn145.

This sequence belongs to the twisted gastrulation protein family. Binds directly to bmp2, bmp4 and bmp7 and can form a ternary complex with bmps and chordin, thus preventing the binding of bmps to their cell surface receptors. In terms of tissue distribution, posterior defects are induced by overexpression. This may arise through alteration of bmp4 or chrd function in the developing tailbud region.

The protein localises to the secreted. Its function is as follows. Involved in dorsal-ventral patterning, permitting peak BMP signaling by antagonizing the residual anti-BMP activity of the cleavage products of chrd. Functions to promote the formation of ventral mesoderm by increasing the activity of bmp7 and other BMPS. Seems to antagonize BMP signaling by forming ternary complexes with chrd and BMPs, thereby preventing BMPs from binding to their receptors. In addition to the anti-BMP function, also has pro-BMP activity, partly mediated by cleavage and degradation of chrd, which releases BMPs from ternary complexes. May be an important modulator of BMP-regulated cartilage development and chondrocyte differentiation. This Xenopus laevis (African clawed frog) protein is Twisted gastrulation protein homolog 1-A (twsg1-a).